The following is a 96-amino-acid chain: MSNVDRYDVHRDGIEKDRKRSRSRKPHQNGQSQSTMDNRPPWNNDTYIEGYDDVDEHGKFRKRGGGMPKTIDRQQEELTKNWTESLREQHHQPQKQ.

Residues 1 to 18 (MSNVDRYDVHRDGIEKDR) show a composition bias toward basic and acidic residues. Residues 1–96 (MSNVDRYDVH…REQHHQPQKQ (96 aa)) are disordered. The span at 28-46 (QNGQSQSTMDNRPPWNNDT) shows a compositional bias: polar residues. Residues 70-96 (TIDRQQEELTKNWTESLREQHHQPQKQ) show a composition bias toward basic and acidic residues.

This is an uncharacterized protein from Caenorhabditis elegans.